Consider the following 576-residue polypeptide: 4-alpha-glucanotransferase, chloroplastic/amyloplastic (576 aa).

The transit peptide at 1–52 directs the protein to the chloroplast; the sequence is MAIHTCFSLIPSSFSSPKLPYPKNTTFQSPIPKLSRPTFMFDRKGSFQNGTA.

It belongs to the disproportionating enzyme family. As to expression, present in leaves, stems, roots, and stolons but is most abundant in developing and mature tubers.

Its subcellular location is the plastid. It is found in the chloroplast. The protein localises to the amyloplast. The enzyme catalyses Transfers a segment of a (1-&gt;4)-alpha-D-glucan to a new position in an acceptor, which may be glucose or a (1-&gt;4)-alpha-D-glucan.. May act during starch breakdown to convert small oligosaccharides into larger molecules upon which starch phosphorylase can act, or may change the structure of starch molecules and grain architecture by modifying chain length, or may generate from starch and glucose oligosaccharides which can serve either as primers for new starch phosphoenzyme. The sequence is that of 4-alpha-glucanotransferase, chloroplastic/amyloplastic (DPEP) from Solanum tuberosum (Potato).